Here is a 530-residue protein sequence, read N- to C-terminus: Bifunctional purine biosynthesis protein PurH (530 aa).

The region spanning 1–148 (MNNARPIRRA…KNHKDVTIVV (148 aa)) is the MGS-like domain.

This sequence belongs to the PurH family.

It carries out the reaction (6R)-10-formyltetrahydrofolate + 5-amino-1-(5-phospho-beta-D-ribosyl)imidazole-4-carboxamide = 5-formamido-1-(5-phospho-D-ribosyl)imidazole-4-carboxamide + (6S)-5,6,7,8-tetrahydrofolate. The catalysed reaction is IMP + H2O = 5-formamido-1-(5-phospho-D-ribosyl)imidazole-4-carboxamide. Its pathway is purine metabolism; IMP biosynthesis via de novo pathway; 5-formamido-1-(5-phospho-D-ribosyl)imidazole-4-carboxamide from 5-amino-1-(5-phospho-D-ribosyl)imidazole-4-carboxamide (10-formyl THF route): step 1/1. The protein operates within purine metabolism; IMP biosynthesis via de novo pathway; IMP from 5-formamido-1-(5-phospho-D-ribosyl)imidazole-4-carboxamide: step 1/1. The sequence is that of Bifunctional purine biosynthesis protein PurH from Vibrio campbellii (strain ATCC BAA-1116).